Consider the following 852-residue polypeptide: Transient receptor potential cation channel subfamily V member 4 (852 aa).

The Cytoplasmic portion of the chain corresponds to 1-455; it reads MADPEDPRDA…RDKWRKFGAV (455 aa). The disordered stretch occupies residues 30 to 51; that stretch reads VEDTPSPAEPSRGPPGAVDGKQ. Residues K178, K183, N187, 222–225, and R234 contribute to the ATP site; that span reads YRGQ. ANK repeat units follow at residues 223–252 and 270–299; these read RGQT…DVHA and FGEL…KQAD. A 1,2-diacyl-sn-glycero-3-phospho-(1D-myo-inositol-4,5-bisphosphate) is bound by residues 235–237, 282–285, and K330; these read RCK and NQPH. One copy of the ANK 3 repeat lies at 355-387; the sequence is DGLSPLMMAAKTGKIGIFQHIIRREIADEDVRH. Residues 456 to 476 form a helical membrane-spanning segment; sequence SFYISVVSYLCAMIIFTLIAY. Residues 477 to 493 are Extracellular-facing; the sequence is YRPMEGPPPYPYTTTID. A helical transmembrane segment spans residues 494 to 520; that stretch reads YLRLAGEIITLLTGILFFFSNIKDLFM. Residues 521 to 533 are Cytoplasmic-facing; it reads KKCPGVNSFFIDG. The chain crosses the membrane as a helical span at residues 534-554; the sequence is SFQLLYFIYSVLVIVTAGLYL. Topologically, residues 555-558 are extracellular; that stretch reads GGVE. A helical membrane pass occupies residues 559-579; the sequence is AYLAVMVFALVLGWMNALYFT. Topologically, residues 580 to 594 are cytoplasmic; sequence RGLKLTGTYSIMIQK. The chain crosses the membrane as a helical span at residues 595-622; the sequence is ILFKDLFRFLLVYLLFMIGYASALVSLL. Residues 623 to 651 lie on the Extracellular side of the membrane; that stretch reads NPCPSSESCSEDHSNCTLPTYPSCRDSQT. Positions 652–671 form an intramembrane region, pore-forming; it reads FSTFLLDLFKLTIGMGDLEM. The Selectivity filter motif lies at 665-668; the sequence is GMGD. D668 contributes to the Ca(2+) binding site. Residues 672-679 are Extracellular-facing; sequence LESAKYPG. The chain crosses the membrane as a helical span at residues 680–708; the sequence is VFIILLVTYIILTFVLLLNMLIALMGETV. Residues 709-852 are Cytoplasmic-facing; the sequence is GQVSKESKHI…RHGQTPSSPL (144 aa).

The protein belongs to the transient receptor (TC 1.A.4) family. TrpV subfamily. TRPV4 sub-subfamily. Homotetramer. Interacts with Ca(2+)-calmodulin.

It is found in the apical cell membrane. Its subcellular location is the cell junction. The protein localises to the adherens junction. It carries out the reaction Ca(2+)(in) = Ca(2+)(out). With respect to regulation, ATP binding enhances channel sensitivity to agonists. Ca(2+)-calmodulin prevents the ATP-mediated increased sensitivity to agonists. Its function is as follows. Non-selective calcium permeant cation channel involved in osmotic sensitivity and mechanosensitivity. Activation by exposure to hypotonicity within the physiological range exhibits an outward rectification. Also activated by phorbol esters. Channel activity seems to be regulated by a calmodulin-dependent mechanism. This chain is Transient receptor potential cation channel subfamily V member 4 (TRPV4), found in Gallus gallus (Chicken).